We begin with the raw amino-acid sequence, 429 residues long: 3-phosphoshikimate 1-carboxyvinyltransferase (429 aa).

3-phosphoshikimate-binding residues include Lys-23, Ser-24, and Arg-28. Lys-23 is a phosphoenolpyruvate binding site. 2 residues coordinate phosphoenolpyruvate: Gly-95 and Arg-123. 3-phosphoshikimate is bound by residues Ser-168, Gln-170, Asp-316, and Lys-343. Gln-170 contributes to the phosphoenolpyruvate binding site. Asp-316 serves as the catalytic Proton acceptor. The phosphoenolpyruvate site is built by Arg-347 and Arg-389.

This sequence belongs to the EPSP synthase family. Monomer.

It is found in the cytoplasm. It catalyses the reaction 3-phosphoshikimate + phosphoenolpyruvate = 5-O-(1-carboxyvinyl)-3-phosphoshikimate + phosphate. The protein operates within metabolic intermediate biosynthesis; chorismate biosynthesis; chorismate from D-erythrose 4-phosphate and phosphoenolpyruvate: step 6/7. Functionally, catalyzes the transfer of the enolpyruvyl moiety of phosphoenolpyruvate (PEP) to the 5-hydroxyl of shikimate-3-phosphate (S3P) to produce enolpyruvyl shikimate-3-phosphate and inorganic phosphate. The polypeptide is 3-phosphoshikimate 1-carboxyvinyltransferase (Oceanobacillus iheyensis (strain DSM 14371 / CIP 107618 / JCM 11309 / KCTC 3954 / HTE831)).